The following is a 268-amino-acid chain: uncharacterized protein (268 aa).

Residues 21-61 (CVICLQKDGLRAQLSPCGHDQFDYSCICRWMDQSLTCPICK) form an RING-type; degenerate zinc finger.

Its subcellular location is the mitochondrion. The protein resides in the nucleus. This is an uncharacterized protein from Schizosaccharomyces pombe (strain 972 / ATCC 24843) (Fission yeast).